The primary structure comprises 349 residues: MIRVAVIGGSGYTGGELLRILAVHPKIEVTYVTSREYAGKPITLVHPNLRGFYNMNFSQFSFDKLGDKADAVFLGLPHKVSLEYVPKILEMGIQVIDLSADFRLKDPTLYKIWYGYEHPYPDLLKKAVYGLPELHYEELKNAKLIASPGCNATATILAGAPLVASSLLETYKLISDVKVGSSEGGAKPHEGSHHPERQNAIRPYEADGHRHAAEAEQELSLIAKRDVKVSLVPHAVSSVRGALASVHGWLSSDISEMDMWKKSIEFYKGRKFIRIIRSNIHPYPDPKFVIGSNFADIGFAIEKRMQRITMFSAIDNLMKGAAGQAVQAFNISRGFEEDEGLRIPPLRPA.

10-13 is an NADP(+) binding site; sequence SGYT. Residue C150 is part of the active site. Residue N316 participates in NADP(+) binding.

This sequence belongs to the NAGSA dehydrogenase family. Type 1 subfamily. LysY sub-subfamily.

The protein resides in the cytoplasm. The enzyme catalyses [amino-group carrier protein]-C-terminal-N-(1-carboxy-5-oxopentan-1-yl)-L-glutamine + phosphate + NADP(+) = [amino-group carrier protein]-C-terminal-N-(1-carboxy-5-phosphooxy-5-oxopentan-1-yl)-L-glutamine + NADPH + H(+). The catalysed reaction is [amino-group carrier protein]-C-terminal-gamma-(L-glutamyl-5-semialdehyde)-L-glutamate + phosphate + NADP(+) = [amino-group carrier protein]-C-terminal-gamma-(5-phospho-L-glutamyl)-L-glutamate + NADPH + H(+). It functions in the pathway amino-acid biosynthesis; L-lysine biosynthesis via AAA pathway; L-lysine from L-alpha-aminoadipate (Thermus route): step 3/5. It participates in amino-acid biosynthesis; L-arginine biosynthesis. Functionally, involved in both the arginine and lysine biosynthetic pathways. The protein is [LysW]-L-2-aminoadipate/[LysW]-L-glutamate phosphate reductase of Sulfurisphaera tokodaii (strain DSM 16993 / JCM 10545 / NBRC 100140 / 7) (Sulfolobus tokodaii).